The primary structure comprises 474 residues: tRNA-2-methylthio-N(6)-dimethylallyladenosine synthase (474 aa).

The region spanning 3–120 (KKLHIKTWGC…LPEMINSVRG (118 aa)) is the MTTase N-terminal domain. Residues C12, C49, C83, C157, C161, and C164 each coordinate [4Fe-4S] cluster. Residues 143-375 (RAEGPTAFVS…QERINQQAMA (233 aa)) enclose the Radical SAM core domain. The 64-residue stretch at 378–441 (RRMLGTVQRI…TNSLRGKVVR (64 aa)) folds into the TRAM domain.

The protein belongs to the methylthiotransferase family. MiaB subfamily. Monomer. It depends on [4Fe-4S] cluster as a cofactor.

Its subcellular location is the cytoplasm. The enzyme catalyses N(6)-dimethylallyladenosine(37) in tRNA + (sulfur carrier)-SH + AH2 + 2 S-adenosyl-L-methionine = 2-methylsulfanyl-N(6)-dimethylallyladenosine(37) in tRNA + (sulfur carrier)-H + 5'-deoxyadenosine + L-methionine + A + S-adenosyl-L-homocysteine + 2 H(+). Catalyzes the methylthiolation of N6-(dimethylallyl)adenosine (i(6)A), leading to the formation of 2-methylthio-N6-(dimethylallyl)adenosine (ms(2)i(6)A) at position 37 in tRNAs that read codons beginning with uridine. This is tRNA-2-methylthio-N(6)-dimethylallyladenosine synthase from Citrobacter koseri (strain ATCC BAA-895 / CDC 4225-83 / SGSC4696).